A 967-amino-acid chain; its full sequence is Leucine--tRNA ligase (967 aa).

Positions 43 to 53 (PYLSGHLHVGH) match the 'HIGH' region motif. Positions 650–654 (KMSKS) match the 'KMSKS' region motif. Lysine 653 is a binding site for ATP.

The protein belongs to the class-I aminoacyl-tRNA synthetase family.

It localises to the cytoplasm. It catalyses the reaction tRNA(Leu) + L-leucine + ATP = L-leucyl-tRNA(Leu) + AMP + diphosphate. In Pyrococcus horikoshii (strain ATCC 700860 / DSM 12428 / JCM 9974 / NBRC 100139 / OT-3), this protein is Leucine--tRNA ligase.